Here is a 128-residue protein sequence, read N- to C-terminus: Large ribosomal subunit protein bL19 (128 aa).

It belongs to the bacterial ribosomal protein bL19 family.

Functionally, this protein is located at the 30S-50S ribosomal subunit interface and may play a role in the structure and function of the aminoacyl-tRNA binding site. The protein is Large ribosomal subunit protein bL19 of Caldicellulosiruptor bescii (strain ATCC BAA-1888 / DSM 6725 / KCTC 15123 / Z-1320) (Anaerocellum thermophilum).